Consider the following 801-residue polypeptide: Palmitoyl thioesterase CPT1C (801 aa).

The Cytoplasmic portion of the chain corresponds to 1-49 (MAEAHQASSLLSSLSSDGAEVELSSSVWQEIYLSALRSWKRNLWRVWND). Residues 50–70 (FLAGVVPATPLSWLFLFSTIQ) form a helical membrane-spanning segment. Over 71–103 (LACLLQLDPSLGLMEKIKELLPDWGGQHHQLQG) the chain is Mitochondrial intermembrane. A helical membrane pass occupies residues 104-124 (LLAAAVFASCLWGTLIFTLHV). Topologically, residues 125 to 801 (ALRLLLSHHG…PNIPKSSTNL (677 aa)) are cytoplasmic. Histidine 469 functions as the Proton acceptor in the catalytic mechanism. Residue 551 to 563 (GKSFIKGCHVSSD) participates in CoA binding. Residues tyrosine 585, serine 587, and threonine 598 each coordinate (R)-carnitine. The interval 760-801 (LFQAGQQFKRQFTGLGESSGWKYSNLSCKTVDPNIPKSSTNL) is required for interaction with GRIA1.

Belongs to the carnitine/choline acetyltransferase family. Peripherally associated with AMPAR complex. AMPAR complex consists of an inner core made of 4 pore-forming GluA/GRIA proteins (GRIA1, GRIA2, GRIA3 and GRIA4) and 4 major auxiliary subunits arranged in a twofold symmetry. One of the two pairs of distinct binding sites is occupied either by CNIH2, CNIH3 or CACNG2, CACNG3. The other harbors CACNG2, CACNG3, CACNG4, CACNG8 or GSG1L. This inner core of AMPAR complex is complemented by outer core constituents binding directly to the GluA/GRIA proteins at sites distinct from the interaction sites of the inner core constituents. Outer core constituents include at least PRRT1, PRRT2, CKAMP44/SHISA9, FRRS1L and NRN1. The proteins of the inner and outer core serve as a platform for other, more peripherally associated AMPAR constituents, including CPT1C. Alone or in combination, these auxiliary subunits control the gating and pharmacology of the AMPAR complex and profoundly impact their biogenesis and protein processing. Interacts with SACM1L; the interaction regulates SACM1L phosphatidylinositol-3-phosphatase activity and translocation to endoplasmic reticulum/trans Golgi network in a malonyl-CoA dependent manner. Interacts with ATL1. Expressed in brain (at protein level).

The protein localises to the synapse. The protein resides in the cell projection. Its subcellular location is the dendrite. It localises to the axon. It is found in the endoplasmic reticulum membrane. The catalysed reaction is S-hexadecanoyl-L-cysteinyl-[protein] + H2O = L-cysteinyl-[protein] + hexadecanoate + H(+). Palmitoyl thioesterase specifically expressed in the endoplasmic reticulum of neurons. Modulates the trafficking of the glutamate receptor, AMPAR, to plasma membrane through depalmitoylation of GRIA1. Also regulates AMPR trafficking through the regulation of SACM1L phosphatidylinositol-3-phosphatase activity by interaction in a malonyl-CoA dependent manner. Binds malonyl-CoA and couples malonyl-CoA to ceramide levels, necessary for proper spine maturation and contributing to systemic energy homeostasis and appetite control. Binds to palmitoyl-CoA, but does not have carnitine palmitoyltransferase 1 catalytic activity or at very low levels. This Rattus norvegicus (Rat) protein is Palmitoyl thioesterase CPT1C (Cpt1c).